The following is a 323-amino-acid chain: Protein MEI2-like 6 (323 aa).

In Oryza sativa subsp. japonica (Rice), this protein is Protein MEI2-like 6 (ML6).